A 570-amino-acid chain; its full sequence is L-ascorbate oxidase (570 aa).

The N-terminal stretch at methionine 1–alanine 18 is a signal peptide. 2 Plastocyanin-like domains span residues tryptophan 33–valine 140 and phenylalanine 154–valine 317. 3 disulfides stabilise this stretch: cysteine 36–cysteine 219, cysteine 98–cysteine 557, and cysteine 197–cysteine 211. Cu cation contacts are provided by histidine 77 and histidine 79. A glycan (N-linked (GlcNAc...) asparagine) is linked at asparagine 109. 2 residues coordinate Cu cation: histidine 121 and histidine 123. Asparagine 196 carries N-linked (GlcNAc...) asparagine glycosylation. Residues asparagine 229, asparagine 343, asparagine 384, asparagine 407, asparagine 434, asparagine 442, and asparagine 458 are each glycosylated (N-linked (GlcNAc...) asparagine). Positions arginine 426–glycine 543 constitute a Plastocyanin-like 3 domain. Residues histidine 463, histidine 466, histidine 468, histidine 525, cysteine 526, histidine 527, histidine 531, and methionine 536 each contribute to the Cu cation site.

This sequence belongs to the multicopper oxidase family. Dimer. Cu cation serves as cofactor.

The protein localises to the secreted. The enzyme catalyses 4 L-ascorbate + O2 = 4 monodehydro-L-ascorbate radical + 2 H2O. Its pathway is cofactor degradation; L-ascorbate degradation. In terms of biological role, ascorbate oxidase involved in a redox system involving ascorbic acid (AsA). The oxidation of AsA represses responses to high salinity and oxidative stress conditions such as vegetative growth and seed production reductions. Negative regulator of defense responses toward incompatible Turnip mosaic virus (TuMV strain UK1) by preventing jasmonic acid (JA)- dependent accumulation of ascorbic acid (AsA, AS) and dehydroascobic acid (DHA). This chain is L-ascorbate oxidase, found in Brassica rapa subsp. pekinensis (Chinese cabbage).